A 196-amino-acid chain; its full sequence is MTSEQYSVKLTPDFDNPKWIGRHKHMFNFLDVNHNGRISLDEMVYKASDIVINNLGATPEQAKRHKDAVEAFFGGAGMKYGVETEWPEYIEGWKRLASEELKRYSKNQITLIRLWGDALFDIIDKDQNGAISLDEWKAYTKSDGIIQSSEDCEETFRVCDIDESGQLDVDEMTRQHLGFWYTMDPACEKLYGGAVP.

Positions 1–7 (MTSEQYS) are excised as a propeptide. EF-hand domains are found at residues 18 to 53 (KWIGRHKHMFNFLDVNHNGRISLDEMVYKASDIVIN), 54 to 108 (NLGA…SKNQ), 111 to 146 (LIRLWGDALFDIIDKDQNGAISLDEWKAYTKSDGII), and 147 to 182 (QSSEDCEETFRVCDIDESGQLDVDEMTRQHLGFWYT). Ca(2+) contacts are provided by Asp-31, Asn-33, Asn-35, Arg-37, and Glu-42. May interact with the chromophore stretches follow at residues 47-57 (ASDIVINNLGA), 62-72 (AKRHKDAVEAF), and 107-117 (NQITLIRLWGD). Asp-124, Asp-126, Asn-128, Glu-135, Asp-160, Asp-162, Ser-164, Gln-166, and Glu-171 together coordinate Ca(2+).

This sequence belongs to the aequorin family. Post-translationally, the reduction of the disulfide bond is necessary to regenerate aequorin from apoaequorin.

In terms of biological role, ca(2+)-dependent bioluminescence photoprotein. Displays an emission peak at 470 nm (blue light). Trace amounts of calcium ion trigger the intramolecular oxidation of the chromophore, coelenterazine into coelenteramide and CO(2) with the concomitant emission of light. This chain is Aequorin-1, found in Aequorea victoria (Water jellyfish).